The following is a 41-amino-acid chain: Trypsin inhibitor (41 aa).

3 cysteine pairs are disulfide-bonded: Cys15–Cys26, Cys17–Cys24, and Cys29–Cys37.

In terms of biological role, has two active sites that simultaneously bind and inhibit trypsin. This chain is Trypsin inhibitor, found in Trichosanthes kirilowii (Chinese snake gourd).